The sequence spans 317 residues: Orange carotenoid-binding protein (317 aa).

The OCP N-terminal domain occupies 18–169; sequence ADVVPATIAR…DMGFTAGKDG (152 aa). Echinenone-binding positions include 34 to 38, 37 to 44, 80 to 83, 107 to 117, 125 to 129, 151 to 161, Y201, 245 to 250, 273 to 284, and W288; these read EDQLA, LALIWFAY, TQAM, LGFWYRLGELM, IPAGY, ITVLRNAVVDM, CQNLKL, and VQTPWFGGNVGM.

Belongs to the orange carotenoid-binding protein family. As to quaternary structure, monomer. Interacts with the APC core of the phycobilisome (PB), probably at a ratio of 1:1 in a light-independent manner; possibly only OCP-R binds to PBs. Interacts with FRP. Detachment from PBs is accelerated by FPR. The cofactor is 3'-hydroxyechinenone. In terms of processing, proteolytically cleaved into a red 16.7 kDa form named red carotenoid-binding protein (RCP) which lacks 15 residues from the N-terminus and approximately 150 residues from the C-terminus.

Its subcellular location is the cellular thylakoid membrane. Acts as a blue-light photoreceptor and photo-protectant. Essential for inhibiting damaged induced by excess blue-green light via a process known as non-photochemical quenching (NPQ). In the dark or dim light the stable inactive form (OCP-O) is orange, upon illumination with blue-green light it converts to a metastable active red form (OCP-R), inducing energy dissipation, quenching cellular fluorescence via NPQ. One OCP-R molecule is sufficient to quench 1 phycobilisome. More OCP-R accumulates under high-light and low temperature; in the dark OCP-R spontaneously reverts to OCP-O. Reversion of OCP-O is accelerated by FRP. A kinetic study suggests conversion of OCP-O to OCP-R is limited by cis-trans proline isomerization of either Gln224-Pro225 or Pro225-Pro226. The chain is Orange carotenoid-binding protein from Synechocystis sp. (strain ATCC 27184 / PCC 6803 / Kazusa).